Reading from the N-terminus, the 103-residue chain is uncharacterized protein (103 aa).

A helical membrane pass occupies residues 38–58 (FTTLITIYVAAFYTGVIGAAV).

It localises to the membrane. This is an uncharacterized protein from Arabidopsis thaliana (Mouse-ear cress).